The primary structure comprises 243 residues: Chalcone--flavanone isomerase (243 aa).

Substrate-binding residues include T50, N115, and S192.

Belongs to the chalcone isomerase family.

The enzyme catalyses a chalcone = a flavanone.. The protein operates within secondary metabolite biosynthesis; flavonoid biosynthesis. Catalyzes the intramolecular cyclization of bicyclic chalcones into tricyclic (S)-flavanones. Responsible for the isomerization of 4,2',4',6'-tetrahydroxychalcone (also termed chalcone) into naringenin. The polypeptide is Chalcone--flavanone isomerase (CHI) (Ipomoea batatas (Sweet potato)).